The chain runs to 228 residues: Small ribosomal subunit protein uS3 (228 aa).

The KH type-2 domain maps to 39–107 (VRAYLQDKLK…PVHINIEEIR (69 aa)).

This sequence belongs to the universal ribosomal protein uS3 family. In terms of assembly, part of the 30S ribosomal subunit. Forms a tight complex with proteins S10 and S14.

Binds the lower part of the 30S subunit head. Binds mRNA in the 70S ribosome, positioning it for translation. This chain is Small ribosomal subunit protein uS3, found in Ectopseudomonas mendocina (strain ymp) (Pseudomonas mendocina).